We begin with the raw amino-acid sequence, 65 residues long: Large ribosomal subunit protein bL35 (65 aa).

The interval Met-1–Lys-28 is disordered.

It belongs to the bacterial ribosomal protein bL35 family.

The protein is Large ribosomal subunit protein bL35 of Acidobacterium capsulatum (strain ATCC 51196 / DSM 11244 / BCRC 80197 / JCM 7670 / NBRC 15755 / NCIMB 13165 / 161).